The chain runs to 173 residues: Photosystem I reaction center subunit XI (173 aa).

Helical transmembrane passes span 92 to 112 and 148 to 168; these read LAGL…LSLY and LIGG…LGII.

It belongs to the PsaL family.

It localises to the cellular thylakoid membrane. The polypeptide is Photosystem I reaction center subunit XI (Nostoc punctiforme (strain ATCC 29133 / PCC 73102)).